A 166-amino-acid polypeptide reads, in one-letter code: UPF0179 protein Tneu_1978 (166 aa).

The tract at residues 140–166 is disordered; that stretch reads PPSPSKSGGATASRDPSRAPPSRPLSK. Pro residues predominate over residues 157–166; the sequence is RAPPSRPLSK.

Belongs to the UPF0179 family.

This is UPF0179 protein Tneu_1978 from Pyrobaculum neutrophilum (strain DSM 2338 / JCM 9278 / NBRC 100436 / V24Sta) (Thermoproteus neutrophilus).